The chain runs to 186 residues: Akirin-1A (186 aa).

Positions 14 to 65 are disordered; it reads EALMSPQSPKRRRCAPLPGSPATPSPQRCAIRPEMQQGQQQPLSQLGGDRRL. Positions 49–60 are enriched in low complexity; the sequence is QQGQQQPLSQLG. The SYVS motif signature appears at 183-186; that stretch reads SYVS.

This sequence belongs to the akirin family.

It is found in the nucleus. In terms of biological role, molecular adapter that acts as a bridge between proteins, and which is involved skeletal muscle development. Functions as a signal transducer for MSTN during skeletal muscle regeneration and myogenesis. This chain is Akirin-1A (akirin1-a), found in Xenopus laevis (African clawed frog).